A 197-amino-acid chain; its full sequence is ATP-dependent Clp protease proteolytic subunit 3 (197 aa).

S96 functions as the Nucleophile in the catalytic mechanism. Residue H121 is part of the active site.

Belongs to the peptidase S14 family. In terms of assembly, fourteen ClpP subunits assemble into 2 heptameric rings which stack back to back to give a disk-like structure with a central cavity, resembling the structure of eukaryotic proteasomes.

It is found in the cytoplasm. It catalyses the reaction Hydrolysis of proteins to small peptides in the presence of ATP and magnesium. alpha-casein is the usual test substrate. In the absence of ATP, only oligopeptides shorter than five residues are hydrolyzed (such as succinyl-Leu-Tyr-|-NHMec, and Leu-Tyr-Leu-|-Tyr-Trp, in which cleavage of the -Tyr-|-Leu- and -Tyr-|-Trp bonds also occurs).. Its function is as follows. Cleaves peptides in various proteins in a process that requires ATP hydrolysis. Has a chymotrypsin-like activity. Plays a major role in the degradation of misfolded proteins. The polypeptide is ATP-dependent Clp protease proteolytic subunit 3 (Prochlorococcus marinus (strain MIT 9313)).